The sequence spans 176 residues: NAD(P)H-quinone oxidoreductase subunit 6, chloroplastic (176 aa).

The next 5 helical transmembrane spans lie at 10-30, 32-52, 61-81, 95-115, and 152-172; these read FLLV…VLLT, PIYS…FYIL, AQLL…VMFM, VGSG…ITII, and FFLP…GAIA.

It belongs to the complex I subunit 6 family. As to quaternary structure, NDH is composed of at least 16 different subunits, 5 of which are encoded in the nucleus.

It is found in the plastid. The protein localises to the chloroplast thylakoid membrane. It catalyses the reaction a plastoquinone + NADH + (n+1) H(+)(in) = a plastoquinol + NAD(+) + n H(+)(out). The catalysed reaction is a plastoquinone + NADPH + (n+1) H(+)(in) = a plastoquinol + NADP(+) + n H(+)(out). NDH shuttles electrons from NAD(P)H:plastoquinone, via FMN and iron-sulfur (Fe-S) centers, to quinones in the photosynthetic chain and possibly in a chloroplast respiratory chain. The immediate electron acceptor for the enzyme in this species is believed to be plastoquinone. Couples the redox reaction to proton translocation, and thus conserves the redox energy in a proton gradient. This chain is NAD(P)H-quinone oxidoreductase subunit 6, chloroplastic (ndhG), found in Manihot esculenta (Cassava).